Here is a 478-residue protein sequence, read N- to C-terminus: MAAFDYNVKDLSLAEAGRHQIRLAEYEMPGLMQLREEYQQEQPLAGARITGSIHMTVQTAVLIETLVALGAQVRWASCNIFSTQDEAAAAVVVGPHGTPEDPQGVPVFAWKGETLEEYWDCVDKIFSWGDELPNMILDDGGDATMAVIRGKQFEEAGMVPPVEEGDSDEYQAFLGMLRKTLAEQPGKWTAIAESVKGVTEETTTGVHRLYHFAEEGVLPFPAMNVNDAVTKSKFDNKYGTRHSLIDGINRATDMLMGGKNVLICGYGDVGKGCAEAMAGQGARVKVTEADPINALQALMDGFPVVHVDQAIGDADIVITATGNMGIISFEQMLAMKDHAVLGNIGHFDNEIDMASLLHRDDVSRVTIKPQVDEFTLPNGKSIVVLSEGRLLNLGNATGHPSFVMSTSFADQTIAQIELFQNDGRYVNEVYRLPKILDEKVARIHVEALGGTITELTKEQAEYIGVDVAGPYKPEHYRY.

Thr56, Asp139, and Glu201 together coordinate substrate. 202 to 204 (TTT) is a binding site for NAD(+). Substrate is bound by residues Lys231 and Asp235. NAD(+)-binding positions include Asn236, 265–270 (GYGDVG), Glu288, Asn323, 344–346 (IGH), and Asn392.

This sequence belongs to the adenosylhomocysteinase family. It depends on NAD(+) as a cofactor.

It is found in the cytoplasm. It catalyses the reaction S-adenosyl-L-homocysteine + H2O = L-homocysteine + adenosine. It functions in the pathway amino-acid biosynthesis; L-homocysteine biosynthesis; L-homocysteine from S-adenosyl-L-homocysteine: step 1/1. May play a key role in the regulation of the intracellular concentration of adenosylhomocysteine. The sequence is that of Adenosylhomocysteinase from Corynebacterium diphtheriae (strain ATCC 700971 / NCTC 13129 / Biotype gravis).